A 134-amino-acid chain; its full sequence is Transcription antitermination protein NusB (134 aa).

The protein belongs to the NusB family.

In terms of biological role, involved in transcription antitermination. Required for transcription of ribosomal RNA (rRNA) genes. Binds specifically to the boxA antiterminator sequence of the ribosomal RNA (rrn) operons. The protein is Transcription antitermination protein NusB of Shewanella woodyi (strain ATCC 51908 / MS32).